Here is a 135-residue protein sequence, read N- to C-terminus: Histone H3 type 1 (135 aa).

The tract at residues 1 to 40 is disordered; that stretch reads MARTKQTARKSTGGKAPRKQLATKAARKTPATGGVKKPHR. Lys5 carries the N6-methyllysine modification. Lys10 carries the post-translational modification N6-acetyllysine; alternate. An N6-methyllysine; alternate modification is found at Lys10. Residue Ser11 is modified to Phosphoserine. Residue Thr12 is modified to Phosphothreonine. Residues Lys15, Lys19, and Lys24 each carry the N6-acetyllysine modification. N6-acetyllysine; alternate is present on Lys28. Residue Lys28 is modified to N6-methyllysine; alternate. 2 positions are modified to N6-methyllysine: Lys36 and Lys37.

It belongs to the histone H3 family. The nucleosome is a histone octamer containing two molecules each of H2A, H2B, H3 and H4 assembled in one H3-H4 heterotetramer and two H2A-H2B heterodimers. The octamer wraps approximately 147 bp of DNA. Post-translationally, acetylation is generally linked to gene activation. Acetylated to form H3K9ac (11%), H3K14ac (17%), H3K18ac (11%), H3K23ac (16%) and H3K27ac (7%). H3K4, H3K35 and H3K36 are not acetylated. H3K4me prevents acetylation. 32% of the histone H3 are acetylated with, on average, 2.4 acetyl-Lys. They are all continuously deacatylated and re-acetylated with a half-life of approximately 2 minutes. Monomethylated to form H3K4me1 (81%), H3K9me1 (16%), H3K27me1 (25%), H3K35me1 (25%) and H3K36me1 (5%). No methylation at H3K14, H3K18 and H3K23. Methylated by a protein complex that includes Mut11. Set1 methylates specifically H3K4. H3K4me1 is associated with silenced euchromatin. Set3 forms H3K9me1, while H3K9me2 is undetected. H3K9me1 is specifically associated with silent, multi-copy transgenes. In terms of processing, no phosphorylation detected.

It is found in the nucleus. It localises to the chromosome. In terms of biological role, core component of nucleosome. Nucleosomes wrap and compact DNA into chromatin, limiting DNA accessibility to the cellular machineries which require DNA as a template. Histones thereby play a central role in transcription regulation, DNA repair, DNA replication and chromosomal stability. DNA accessibility is regulated via a complex set of post-translational modifications of histones, also called histone code, and nucleosome remodeling. The sequence is that of Histone H3 type 1 (ch3-I) from Chlamydomonas reinhardtii (Chlamydomonas smithii).